The chain runs to 509 residues: Histidine--tRNA ligase, cytoplasmic (509 aa).

Alanine 2 carries the post-translational modification N-acetylalanine. Residues 3–59 (DRAALEELVRLQGAHVRGLKEQKASAEQIEEEVTKLLKLKAQLGQDEGKQKFVLKTP) form the WHEP-TRS domain. Phosphoserine is present on serine 66. L-histidine contacts are provided by residues 130–132 (DLT), arginine 157, glutamine 173, aspartate 177, arginine 326, and 330–331 (YY). At serine 356 the chain carries Phosphoserine.

Belongs to the class-II aminoacyl-tRNA synthetase family. Homodimer.

It is found in the cytoplasm. It carries out the reaction tRNA(His) + L-histidine + ATP = L-histidyl-tRNA(His) + AMP + diphosphate + H(+). Its function is as follows. Catalyzes the ATP-dependent ligation of histidine to the 3'-end of its cognate tRNA, via the formation of an aminoacyl-adenylate intermediate (His-AMP). Plays a role in axon guidance. This is Histidine--tRNA ligase, cytoplasmic (Hars1) from Mus musculus (Mouse).